A 348-amino-acid chain; its full sequence is Rhodopsin (348 aa).

N-acetylmethionine is present on Met-1. Residues 1 to 36 (MNGTEGPNFYVPFSNKTGVVRSPFEYPQYYLAEPWQ) are Extracellular-facing. N-linked (GlcNAc...) asparagine glycans are attached at residues Asn-2 and Asn-15. Residues 37–61 (FSMLAAYMFLLIVLGFPINFLTLYV) traverse the membrane as a helical segment. At 62–73 (TVQHKKLRTPLN) the chain is on the cytoplasmic side. A helical transmembrane segment spans residues 74–96 (YILLNLAVADLFMVFGGFTTTLY). Residues 97-110 (TSLHGYFVFGPTGC) are Extracellular-facing. A disulfide bond links Cys-110 and Cys-187. Residues 111–133 (NLEGFFATLGGEIALWSLVVLAI) form a helical membrane-spanning segment. The 'Ionic lock' involved in activated form stabilization motif lies at 134 to 136 (ERY). At 134-152 (ERYVVVCKPMSNFRFGENH) the chain is on the cytoplasmic side. Residues 153–173 (AIMGVAFTWVMALACAAPPLV) traverse the membrane as a helical segment. At 174 to 202 (GWSRYIPEGMQCSCGIDYYTLKPEVNNES) the chain is on the extracellular side. Glu-201 contributes to the Zn(2+) binding site. A helical membrane pass occupies residues 203–224 (FVIYMFVVHFTIPMIVIFFCYG). The Cytoplasmic segment spans residues 225–252 (QLVFTVKEAAAQQQESATTQKAEKEVTR). A helical membrane pass occupies residues 253 to 274 (MVIIMVIAFLICWVPYASVAFY). At 275-286 (IFTHQGSNFGPI) the chain is on the extracellular side. Gln-279 serves as a coordination point for Zn(2+). A helical membrane pass occupies residues 287 to 308 (FMTLPAFFAKSSSIYNPVIYIM). The residue at position 296 (Lys-296) is an N6-(retinylidene)lysine. Residues 309–348 (MNKQFRNCMLTTLCCGKNPLGDDEASTTGSKTETSQVAPA) are Cytoplasmic-facing. S-palmitoyl cysteine attachment occurs at residues Cys-322 and Cys-323. The tract at residues 330 to 348 (DDEASTTGSKTETSQVAPA) is interaction with SAG. Ser-334 is modified (phosphoserine). Phosphothreonine is present on residues Thr-335 and Thr-336. Position 338 is a phosphoserine (Ser-338). Phosphothreonine occurs at positions 340 and 342. Position 343 is a phosphoserine (Ser-343).

The protein belongs to the G-protein coupled receptor 1 family. Opsin subfamily. In terms of assembly, homodimer. May form a complex composed of RHO, GRK1 and RCVRN in a Ca(2+)-dependent manner; RCVRN prevents the interaction between GRK1 and RHO. Interacts with GRK1. Interacts (phosphorylated form) with SAG. Interacts with GNAT1. Interacts with GNAT3. SAG and G-proteins compete for a common binding site. Interacts with PRCD; the interaction promotes PRCD stability. Forms a complex with ASAP1 and ARF4. Forms a complex with ASAP1, RAB11A, Rabin8/RAB3IP, ARF4 and RAB11FIP3; the complex regulates Golgi-to-cilia rhodopsin/RHO transport in photoreceptors. Phosphorylated on some or all of the serine and threonine residues present in the C-terminal region. Post-translationally, contains one covalently linked retinal chromophore. Upon light absorption, the covalently bound 11-cis-retinal is converted to all-trans-retinal. After hydrolysis of the Schiff base and release of the covalently bound all-trans-retinal, active rhodopsin is regenerated by binding of a fresh molecule of 11-cis-retinal.

The protein resides in the membrane. The protein localises to the cell projection. It is found in the cilium. It localises to the photoreceptor outer segment. Its function is as follows. Photoreceptor required for image-forming vision at low light intensity. Required for photoreceptor cell viability after birth. Light-induced isomerization of 11-cis to all-trans retinal triggers a conformational change that activates signaling via G-proteins. Subsequent receptor phosphorylation mediates displacement of the bound G-protein alpha subunit by the arrestin SAG and terminates signaling. The polypeptide is Rhodopsin (RHO) (Felis catus (Cat)).